Reading from the N-terminus, the 405-residue chain is CLIP domain-containing serine protease B8 (405 aa).

Positions 1–24 (MSSAVLLLLVCGCALAVLSPVAYG) are cleaved as a signal peptide. 3 cysteine pairs are disulfide-bonded: C41–C94, C52–C84, and C58–C95. In terms of domain architecture, Clip spans 41-95 (CDIPNEPNPGQCMLPAECVAYGKINDVSSLSSIERFSFIKQIQCNGSDTVPYVCC). N-linked (GlcNAc...) asparagine glycosylation is found at N85 and N108. One can recognise a Peptidase S1 domain in the interval 137-404 (IRGGQLAEID…YLPWIKMYTG (268 aa)). An intrachain disulfide couples C167 to C183. Residues H182 and D249 each act as charge relay system in the active site. Intrachain disulfides connect C322/C339 and C349/C380. S353 functions as the Charge relay system in the catalytic mechanism.

The protein belongs to the peptidase S1 family. CLIP subfamily. Post-translationally, proteolytic cleavage is necessary for activation. Cleaved and activated by CLIPB4.

The protein resides in the secreted. Functionally, serine protease that functions in the melanization-mediated immune response. Preferentially, cleaves substrates with an arginine at the P1 site. May be involved in the activation of the prophenoloxidase cascade upstream of CLIPB9; does not cleave prophenoloxidase. The chain is CLIP domain-containing serine protease B8 from Anopheles gambiae (African malaria mosquito).